A 378-amino-acid chain; its full sequence is Ribosomal RNA large subunit methyltransferase G (378 aa).

This sequence belongs to the methyltransferase superfamily. RlmG family.

The protein resides in the cytoplasm. It catalyses the reaction guanosine(1835) in 23S rRNA + S-adenosyl-L-methionine = N(2)-methylguanosine(1835) in 23S rRNA + S-adenosyl-L-homocysteine + H(+). Its function is as follows. Specifically methylates the guanine in position 1835 (m2G1835) of 23S rRNA. The chain is Ribosomal RNA large subunit methyltransferase G from Escherichia coli O6:K15:H31 (strain 536 / UPEC).